Here is a 100-residue protein sequence, read N- to C-terminus: Small ribosomal subunit protein uS14c (100 aa).

The segment at methionine 1–isoleucine 31 is disordered.

This sequence belongs to the universal ribosomal protein uS14 family. In terms of assembly, part of the 30S ribosomal subunit.

It localises to the plastid. The protein localises to the chloroplast. In terms of biological role, binds 16S rRNA, required for the assembly of 30S particles. The protein is Small ribosomal subunit protein uS14c of Nicotiana tomentosiformis (Tobacco).